The primary structure comprises 228 residues: MPKQKAPRKQLKSYKLKHINKSIQEGDAVLMRSSEPGKPSYVARVEAIETDARGSHAKVRVRWYYRPEESIGGRRQFHGAKEVFLSDHFDFQSADTIEGKCKVHSFSSYTKLDSVGNDDFFCRFEYNSTTGAFDPDRVTVFCKCEMPYNPDDLMVQCEECSEWFHPSCIGTTIEEAKKPDNFYCEECSPQQQNLHNSNSTSNNRDAKVNGKRSLEVTKSKNKHTKRPG.

One can recognise a BAH domain in the interval 21-137 (KSIQEGDAVL…STTGAFDPDR (117 aa)). The segment at 139–190 (TVFCKCEMPYNPDDLMVQCEECSEWFHPSCIGTTIEEAKKPDNFYCEECSPQ) adopts a PHD-type zinc-finger fold. Positions 191 to 203 (QQNLHNSNSTSNN) are enriched in polar residues. Residues 191-228 (QQNLHNSNSTSNNRDAKVNGKRSLEVTKSKNKHTKRPG) form a disordered region. The span at 204–218 (RDAKVNGKRSLEVTK) shows a compositional bias: basic and acidic residues. The short motif at 210 to 217 (GKRSLEVT) is the Nuclear localization signal element. The span at 219–228 (SKNKHTKRPG) shows a compositional bias: basic residues.

It belongs to the SHL1/EBS protein family. In terms of assembly, recognizes di- and trimethylated histone H3 at lysine 4. Interacts with HDA6. Interacts with DEK3. In terms of tissue distribution, expressed ubiquitously. Mostly expressed in roots, stems, leaves and flowers, and, to a lower extent, in siliques.

It localises to the nucleus. In terms of biological role, chromatin remodeling factor that binds to methylated histone (e.g. H3K4me2/3) to prevent their acetylation (e.g. H3K9K14Ac), likely by recruiting histone deacetylase (HDAC) complexes, and thus regulate the transcription of target genes. Required during development and for fertility, probably by modulating developmental gene expression. Promotes development speed, but at fitness cost. Involved in the chromatin-mediated repression of floral initiation and controls genes regulating flowering. Negatively regulates the expression of the floral integrator SOC1, by preventing high levels of H3 acetylation, thus maintaining an inactive chromatin conformation. The chain is Chromatin remodeling protein SHL from Arabidopsis thaliana (Mouse-ear cress).